We begin with the raw amino-acid sequence, 142 residues long: Potassium voltage-gated channel subfamily E regulatory beta subunit 5 (142 aa).

N-linked (GlcNAc...) asparagine glycosylation is found at Asn-2 and Asn-25. A helical transmembrane segment spans residues 61-81 (LYILLIMIFYACLAGGLILAY). Residues 82 to 142 (TRSRKLVEAK…PALAQGAERV (61 aa)) lie on the Cytoplasmic side of the membrane. The interval 119 to 142 (SQAEGRRQLASEGLPALAQGAERV) is disordered.

This sequence belongs to the potassium channel KCNE family. As to quaternary structure, interacts with KCNQ1; impairs KCNQ1 localization in lipid rafts and only conducts current upon strong and continued depolarization. As to expression, highly expressed in heart, skeletal muscle, brain, spinal cord and placenta.

The protein localises to the membrane. Functionally, potassium channel ancillary subunit that is essential for generation of some native K(+) currents by virtue of formation of heteromeric ion channel complex with voltage-gated potassium (Kv) channel pore-forming alpha subunits. Functions as an inhibitory beta-subunit of the repolarizing cardiac potassium ion channel KCNQ1. This Homo sapiens (Human) protein is Potassium voltage-gated channel subfamily E regulatory beta subunit 5 (KCNE5).